Here is a 533-residue protein sequence, read N- to C-terminus: Probable protein kinase UbiB (533 aa).

The helical transmembrane segment at 24 to 44 (LILELPMLPWWLRLLGATLPW) threads the bilayer. The region spanning 126-494 (RFEREPLASA…WKGSRHDWLG (369 aa)) is the Protein kinase domain. ATP contacts are provided by residues 132–140 (LASASVAQV) and lysine 154. The active-site Proton acceptor is the aspartate 289. The chain crosses the membrane as a helical span at residues 510–530 (LGQQLEAWPAWVMLAGGVFLI).

Belongs to the ABC1 family. UbiB subfamily.

The protein localises to the cell inner membrane. It participates in cofactor biosynthesis; ubiquinone biosynthesis [regulation]. Is probably a protein kinase regulator of UbiI activity which is involved in aerobic coenzyme Q (ubiquinone) biosynthesis. This Pseudomonas aeruginosa (strain UCBPP-PA14) protein is Probable protein kinase UbiB.